The following is a 200-amino-acid chain: MLDAALIKECADPSLKPAIVEQFVAAAGSTDPLAVSVESGGRLILVPKATSAGEAMAIVRQYVGQAVVRVGLTQFPVGVGVKNAADLQPDLVDACENLRKGTSMFAKVLRIVAKSYGNPESDDVIPQIFEDAVYAWKTGEFEGVSVFQAPDPGGSVATEEVLRSDDRDSHTQDSASEWPEGNDSVGSAAMRIDLSRIGGT.

The segment at 149–200 is disordered; the sequence is APDPGGSVATEEVLRSDDRDSHTQDSASEWPEGNDSVGSAAMRIDLSRIGGT. The span at 160-171 shows a compositional bias: basic and acidic residues; that stretch reads EVLRSDDRDSHT.

It to A.tumefaciens Ti plasmid conjugal transfer region I ORFR2 and ORFR3.

This is an uncharacterized protein from Sinorhizobium fredii (strain NBRC 101917 / NGR234).